The primary structure comprises 411 residues: Multidrug resistance protein MdtA (411 aa).

An N-terminal signal peptide occupies residues 1–19 (MNAKRIRGLLILAAVIAIA). Residues 31–49 (PAAPGTSEQHAARTSHSEN) show a composition bias toward polar residues. The tract at residues 31–58 (PAAPGTSEQHAARTSHSENSGSGGGRRA) is disordered.

It belongs to the membrane fusion protein (MFP) (TC 8.A.1) family. In terms of assembly, part of a tripartite efflux system composed of MdtA, MdtB and MdtC.

Its subcellular location is the cell inner membrane. In Pectobacterium atrosepticum (strain SCRI 1043 / ATCC BAA-672) (Erwinia carotovora subsp. atroseptica), this protein is Multidrug resistance protein MdtA.